The primary structure comprises 189 residues: Peptidyl-tRNA hydrolase (189 aa).

TRNA is bound at residue Tyr15. Residue His20 is the Proton acceptor of the active site. 3 residues coordinate tRNA: Phe66, Asn68, and Asn114.

This sequence belongs to the PTH family. As to quaternary structure, monomer.

The protein resides in the cytoplasm. The enzyme catalyses an N-acyl-L-alpha-aminoacyl-tRNA + H2O = an N-acyl-L-amino acid + a tRNA + H(+). Its function is as follows. Hydrolyzes ribosome-free peptidyl-tRNAs (with 1 or more amino acids incorporated), which drop off the ribosome during protein synthesis, or as a result of ribosome stalling. Functionally, catalyzes the release of premature peptidyl moieties from peptidyl-tRNA molecules trapped in stalled 50S ribosomal subunits, and thus maintains levels of free tRNAs and 50S ribosomes. This Streptococcus suis (strain 98HAH33) protein is Peptidyl-tRNA hydrolase.